Here is a 150-residue protein sequence, read N- to C-terminus: Ribosomal RNA large subunit methyltransferase H (150 aa).

S-adenosyl-L-methionine is bound by residues A100 and 118–123; that span reads LSEMTF.

The protein belongs to the RNA methyltransferase RlmH family. In terms of assembly, homodimer.

The protein resides in the cytoplasm. It carries out the reaction pseudouridine(1915) in 23S rRNA + S-adenosyl-L-methionine = N(3)-methylpseudouridine(1915) in 23S rRNA + S-adenosyl-L-homocysteine + H(+). In terms of biological role, specifically methylates the pseudouridine at position 1915 (m3Psi1915) in 23S rRNA. In Helicobacter pylori (strain P12), this protein is Ribosomal RNA large subunit methyltransferase H.